The following is a 463-amino-acid chain: General transcription factor IIH subunit 4 (463 aa).

This sequence belongs to the TFB2 family. Component of the 7-subunit TFIIH core complex composed of XPB/ERCC3, XPD/ERCC2, GTF2H1, GTF2H2, GTF2H3, GTF2H4 and GTF2H5, which is active in NER. The core complex associates with the 3-subunit CDK-activating kinase (CAK) module composed of CCNH/cyclin H, CDK7 and MNAT1 to form the 10-subunit holoenzyme (holo-TFIIH) active in transcription. Part of TBP-based Pol II pre-initiation complex (PIC), in which Pol II core assembles with general transcription factors and other specific initiation factors including GTF2E1, GTF2E2, GTF2F1, GTF2F2, TCEA1, ERCC2, ERCC3, GTF2H2, GTF2H3, GTF2H4, GTF2H5, GTF2A1, GTF2A2, GTF2B and TBP; this large multi-subunit PIC complex mediates DNA unwinding and targets Pol II core to the transcription start site where the first phosphodiester bond forms.

It localises to the nucleus. Its function is as follows. Component of the general transcription and DNA repair factor IIH (TFIIH) core complex, which is involved in general and transcription-coupled nucleotide excision repair (NER) of damaged DNA and, when complexed to CAK, in RNA transcription by RNA polymerase II. In NER, TFIIH acts by opening DNA around the lesion to allow the excision of the damaged oligonucleotide and its replacement by a new DNA fragment. In transcription, TFIIH has an essential role in transcription initiation. When the pre-initiation complex (PIC) has been established, TFIIH is required for promoter opening and promoter escape. Phosphorylation of the C-terminal tail (CTD) of the largest subunit of RNA polymerase II by the kinase module CAK controls the initiation of transcription. This is General transcription factor IIH subunit 4 (Gtf2h4) from Mus musculus (Mouse).